We begin with the raw amino-acid sequence, 273 residues long: 4-hydroxy-tetrahydrodipicolinate reductase (273 aa).

NAD(+)-binding positions include 10–15, E36, 100–102, and 124–127; these read GAGGRM, GTT, and SGNM. H157 (proton donor/acceptor) is an active-site residue. H158 serves as a coordination point for (S)-2,3,4,5-tetrahydrodipicolinate. The active-site Proton donor is K161. 167–168 is a binding site for (S)-2,3,4,5-tetrahydrodipicolinate; that stretch reads GT.

This sequence belongs to the DapB family.

It is found in the cytoplasm. The catalysed reaction is (S)-2,3,4,5-tetrahydrodipicolinate + NAD(+) + H2O = (2S,4S)-4-hydroxy-2,3,4,5-tetrahydrodipicolinate + NADH + H(+). It carries out the reaction (S)-2,3,4,5-tetrahydrodipicolinate + NADP(+) + H2O = (2S,4S)-4-hydroxy-2,3,4,5-tetrahydrodipicolinate + NADPH + H(+). It functions in the pathway amino-acid biosynthesis; L-lysine biosynthesis via DAP pathway; (S)-tetrahydrodipicolinate from L-aspartate: step 4/4. Its function is as follows. Catalyzes the conversion of 4-hydroxy-tetrahydrodipicolinate (HTPA) to tetrahydrodipicolinate. The chain is 4-hydroxy-tetrahydrodipicolinate reductase from Rhodopseudomonas palustris (strain BisA53).